The sequence spans 222 residues: Dense granule protein 3 (222 aa).

A run of 2 helical transmembrane segments spans residues 22–42 (LIPF…GGLA) and 162–182 (IPGY…RKVL). The Prevents secretion from ER signature appears at 219–222 (KKQT).

As to quaternary structure, homodimer. Interacts (via N-terminus) with human host CAMLG (via N-terminus).

The protein localises to the cytoplasm. The protein resides in the host endoplasmic reticulum. It is found in the parasitophorous vacuole membrane. Functionally, direct host-parasite interaction occurs at the cytoplasmic faces of the parasitophorous vacuole membrane (PVM) and the host endoplasmic reticulum (ER) membrane via GRA3 and host CAMLG association. Direct insertion of GRA3 ER retrieval motif into the host ER membrane contributes to the host ER recruitment to the PVM. This Toxoplasma gondii protein is Dense granule protein 3.